The primary structure comprises 378 residues: Alanine racemase (378 aa).

Lysine 40 (proton acceptor; specific for D-alanine) is an active-site residue. At lysine 40 the chain carries N6-(pyridoxal phosphate)lysine. Arginine 140 provides a ligand contact to substrate. Tyrosine 270 functions as the Proton acceptor; specific for L-alanine in the catalytic mechanism. Residue methionine 317 coordinates substrate.

The protein belongs to the alanine racemase family. It depends on pyridoxal 5'-phosphate as a cofactor.

It catalyses the reaction L-alanine = D-alanine. Its pathway is amino-acid biosynthesis; D-alanine biosynthesis; D-alanine from L-alanine: step 1/1. Catalyzes the interconversion of L-alanine and D-alanine. May also act on other amino acids. In Lacticaseibacillus casei (strain BL23) (Lactobacillus casei), this protein is Alanine racemase (alr).